A 204-amino-acid chain; its full sequence is Holliday junction branch migration complex subunit RuvA (204 aa).

The domain I stretch occupies residues 1–64 (MIGRLRGILL…EDAQLLYGFN (64 aa)). The interval 65–143 (TVKERALFRE…GWSAGDLFTP (79 aa)) is domain II. The segment at 144–155 (FTDAAPVDSGST) is flexible linker. Positions 156–204 (SSNSAEEEAVSALLALGYKPVQASKVVSQIAKPDMTSEQLIREALKSMV) are domain III.

It belongs to the RuvA family. As to quaternary structure, homotetramer. Forms an RuvA(8)-RuvB(12)-Holliday junction (HJ) complex. HJ DNA is sandwiched between 2 RuvA tetramers; dsDNA enters through RuvA and exits via RuvB. An RuvB hexamer assembles on each DNA strand where it exits the tetramer. Each RuvB hexamer is contacted by two RuvA subunits (via domain III) on 2 adjacent RuvB subunits; this complex drives branch migration. In the full resolvosome a probable DNA-RuvA(4)-RuvB(12)-RuvC(2) complex forms which resolves the HJ.

It is found in the cytoplasm. In terms of biological role, the RuvA-RuvB-RuvC complex processes Holliday junction (HJ) DNA during genetic recombination and DNA repair, while the RuvA-RuvB complex plays an important role in the rescue of blocked DNA replication forks via replication fork reversal (RFR). RuvA specifically binds to HJ cruciform DNA, conferring on it an open structure. The RuvB hexamer acts as an ATP-dependent pump, pulling dsDNA into and through the RuvAB complex. HJ branch migration allows RuvC to scan DNA until it finds its consensus sequence, where it cleaves and resolves the cruciform DNA. The polypeptide is Holliday junction branch migration complex subunit RuvA (Vibrio vulnificus (strain CMCP6)).